The sequence spans 671 residues: tRNA 5-methylaminomethyl-2-thiouridine biosynthesis bifunctional protein MnmC (671 aa).

A tRNA (mnm(5)s(2)U34)-methyltransferase region spans residues 1-245 (MVNVMNTLSF…KREMLWGEKP (245 aa)). An FAD-dependent cmnm(5)s(2)U34 oxidoreductase region spans residues 272–671 (VGGGVASLFV…RKLLKGSKVE (400 aa)).

It in the N-terminal section; belongs to the methyltransferase superfamily. tRNA (mnm(5)s(2)U34)-methyltransferase family. The protein in the C-terminal section; belongs to the DAO family. It depends on FAD as a cofactor.

Its subcellular location is the cytoplasm. The enzyme catalyses 5-aminomethyl-2-thiouridine(34) in tRNA + S-adenosyl-L-methionine = 5-methylaminomethyl-2-thiouridine(34) in tRNA + S-adenosyl-L-homocysteine + H(+). Its function is as follows. Catalyzes the last two steps in the biosynthesis of 5-methylaminomethyl-2-thiouridine (mnm(5)s(2)U) at the wobble position (U34) in tRNA. Catalyzes the FAD-dependent demodification of cmnm(5)s(2)U34 to nm(5)s(2)U34, followed by the transfer of a methyl group from S-adenosyl-L-methionine to nm(5)s(2)U34, to form mnm(5)s(2)U34. This chain is tRNA 5-methylaminomethyl-2-thiouridine biosynthesis bifunctional protein MnmC, found in Actinobacillus pleuropneumoniae serotype 3 (strain JL03).